The primary structure comprises 257 residues: Golgi SNAP receptor complex member 1-2 (257 aa).

The Cytoplasmic segment spans residues 1-235 (MTESSLDLQE…GSIKRKRSRD (235 aa)). The residue at position 51 (Asn51) is a Phosphoserine. Residues 113 to 147 (TQKLARHRDILHEYTQEFRRIKGNINSLREHAELL) adopt a coiled-coil conformation. A helical; Anchor for type IV membrane protein transmembrane segment spans residues 236 to 256 (TLILSAVIAACTLFLIIYWLS). A topological domain (vesicular) is located at residue Lys257.

This sequence belongs to the GOSR1 family. As to quaternary structure, component of several multiprotein Golgi SNARE complexes.

The protein resides in the golgi apparatus membrane. It localises to the endoplasmic reticulum membrane. Functionally, involved in transport from the ER to the Golgi apparatus as well as in intra-Golgi transport. It belongs to a super-family of proteins called t-SNAREs or soluble NSF (N-ethylmaleimide-sensitive factor) attachment protein receptor. The polypeptide is Golgi SNAP receptor complex member 1-2 (GOS12) (Arabidopsis thaliana (Mouse-ear cress)).